A 267-amino-acid chain; its full sequence is 5'-nucleotidase SurE (267 aa).

A divalent metal cation contacts are provided by aspartate 9, aspartate 10, serine 40, and asparagine 97.

The protein belongs to the SurE nucleotidase family. The cofactor is a divalent metal cation.

It is found in the cytoplasm. It carries out the reaction a ribonucleoside 5'-phosphate + H2O = a ribonucleoside + phosphate. In terms of biological role, nucleotidase that shows phosphatase activity on nucleoside 5'-monophosphates. This Helicobacter pylori (strain P12) protein is 5'-nucleotidase SurE.